A 520-amino-acid chain; its full sequence is Pantetheine hydrolase VNN2 (520 aa).

The first 22 residues, methionine 1–threonine 22, serve as a signal peptide directing secretion. The 276-residue stretch at tyrosine 31–serine 306 folds into the CN hydrolase domain. An N-linked (GlcNAc...) asparagine glycan is attached at asparagine 39. Glutamate 80 serves as the catalytic Proton acceptor. The active-site Proton donor is lysine 179. Residue cysteine 211 is the Nucleophile of the active site. N-linked (GlcNAc...) asparagine glycosylation is found at asparagine 273, asparagine 347, asparagine 357, asparagine 411, and asparagine 468. Cysteine 493 carries GPI-anchor amidated cysteine lipidation. Positions glycine 494–leucine 520 are cleaved as a propeptide — removed in mature form.

It belongs to the carbon-nitrogen hydrolase superfamily. BTD/VNN family. In terms of tissue distribution, widely expressed with higher expression in spleen and blood.

The protein localises to the cell membrane. It carries out the reaction (R)-pantetheine + H2O = cysteamine + (R)-pantothenate. Amidohydrolase that hydrolyzes specifically one of the carboamide linkages in D-pantetheine thus recycling pantothenic acid (vitamin B5) and releasing cysteamine. Involved in the thymus homing of bone marrow cells. May regulate beta-2 integrin-mediated cell adhesion, migration and motility of neutrophil. This Homo sapiens (Human) protein is Pantetheine hydrolase VNN2.